A 288-amino-acid polypeptide reads, in one-letter code: CBY1-interacting BAR domain-containing protein 1 (288 aa).

Residues 1 to 47 (MLRRSLENRDAQTRQLQDAVTNVEKHFGELCQIFAAYVRKTARLRDK) constitute a mitochondrion transit peptide. Residues 10-220 (DAQTRQLQDA…KIDEEEDLEV (211 aa)) are BAR-like. The stretch at 107 to 176 (KMKRDDLKAT…ETIDNFEKQK (70 aa)) forms a coiled coil. A disordered region spans residues 266 to 288 (RKDHQTEDDDEEDEDLDVTEEEN). Residues 271–288 (TEDDDEEDEDLDVTEEEN) are compositionally biased toward acidic residues.

This sequence belongs to the CIBAR family. In terms of assembly, homodimer (via BAR-like domain). Heterodimer with FAM92B (via BAR-like domains). Interacts (via BAR-like domain) with CBY1; this interaction is required for targeting FAM92A to centriole and cilium basal body. Interacts (via BAR-like domain) with CBY3; both proteins form a ninefold symmetric structure at the flagellar base; are recruited to the annulus in a mutually dependent manner and regulate annulus positionning.

It is found in the cytoplasm. Its subcellular location is the cytoskeleton. The protein localises to the microtubule organizing center. It localises to the centrosome. The protein resides in the centriole. It is found in the cilium basal body. Its subcellular location is the cell projection. The protein localises to the cilium. It localises to the nucleus. The protein resides in the mitochondrion inner membrane. It is found in the flagellum. Its function is as follows. Plays a critical role in regulating mitochondrial ultrastructure and function by maintaining the integrity of mitochondrial morphology, particularly the organization of cristae. Preferentially binds to negatively charged phospholipids like cardiolipin and phosphatidylinositol 4,5-bisphosphate enhancing its interaction with mitochondrial membranes. Induces membrane curvature and tubulation, which are critical for maintaining mitochondrial ultrastructure and the organization of cristae. Plays a crucial role in ciliogenesis. May play a role in limb development through its role in ciliogenesis. Plays a key role in the correct positioning of the annulus, a septin-based ring structure in the sperm flagellum, serving both as a physical barrier and a membrane diffusion barrier that separates the midpiece (MP) from the principal piece (PP). This positioning is essential for proper sperm motility and function. Interacts with CBY3 to form a complex which localizes to the curved membrane region of the flagellar pocket. By doing so, may provide stability and rigidity to the periannular membrane to prevent membrane deformation. This function is crucial for halting annulus migration at the proximal end of the fibrous sheath-containing PP. This is CBY1-interacting BAR domain-containing protein 1 from Bos taurus (Bovine).